A 199-amino-acid chain; its full sequence is FMN-dependent NADH:quinone oxidoreductase (199 aa).

Residues Ser-9 and 95–98 each bind FMN; that span reads MYNF.

This sequence belongs to the azoreductase type 1 family. As to quaternary structure, homodimer. FMN serves as cofactor.

The catalysed reaction is 2 a quinone + NADH + H(+) = 2 a 1,4-benzosemiquinone + NAD(+). The enzyme catalyses N,N-dimethyl-1,4-phenylenediamine + anthranilate + 2 NAD(+) = 2-(4-dimethylaminophenyl)diazenylbenzoate + 2 NADH + 2 H(+). Quinone reductase that provides resistance to thiol-specific stress caused by electrophilic quinones. Functionally, also exhibits azoreductase activity. Catalyzes the reductive cleavage of the azo bond in aromatic azo compounds to the corresponding amines. This chain is FMN-dependent NADH:quinone oxidoreductase, found in Dechloromonas aromatica (strain RCB).